Reading from the N-terminus, the 442-residue chain is Proline--tRNA ligase (442 aa).

The protein belongs to the class-II aminoacyl-tRNA synthetase family. ProS type 2 subfamily. As to quaternary structure, homodimer.

The protein localises to the cytoplasm. It carries out the reaction tRNA(Pro) + L-proline + ATP = L-prolyl-tRNA(Pro) + AMP + diphosphate. In terms of biological role, catalyzes the attachment of proline to tRNA(Pro) in a two-step reaction: proline is first activated by ATP to form Pro-AMP and then transferred to the acceptor end of tRNA(Pro). This chain is Proline--tRNA ligase, found in Mesorhizobium japonicum (strain LMG 29417 / CECT 9101 / MAFF 303099) (Mesorhizobium loti (strain MAFF 303099)).